The sequence spans 341 residues: UPF0283 membrane protein HD_1769 (341 aa).

The next 3 helical transmembrane spans lie at 57–77, 86–106, and 204–224; these read LLAV…QCLI, IDLA…GAII, and ENAI…MIAW.

This sequence belongs to the UPF0283 family.

Its subcellular location is the cell inner membrane. The polypeptide is UPF0283 membrane protein HD_1769 (Haemophilus ducreyi (strain 35000HP / ATCC 700724)).